The sequence spans 270 residues: L-cystine-binding protein TcyK (270 aa).

A signal peptide spans 1 to 20 (MKTKTAFMAILFSLITVLSA). Cys21 carries the N-palmitoyl cysteine lipid modification. A lipid anchor (S-diacylglycerol cysteine) is attached at Cys21.

Belongs to the bacterial solute-binding protein 3 family. The complex is composed of two ATP-binding proteins (TcyN), two transmembrane proteins (TcyL and TcyM) and two solute-binding proteins (TcyJ and TcyK).

The protein localises to the cell membrane. In terms of biological role, part of the ABC transporter complex TcyJKLMN involved in L-cystine import. Is also involved in cystathionine, djenkolate, and S-methylcysteine transport. The sequence is that of L-cystine-binding protein TcyK (tcyK) from Bacillus subtilis (strain 168).